A 388-amino-acid chain; its full sequence is Succinate--CoA ligase [ADP-forming] subunit beta (388 aa).

The ATP-grasp domain occupies 9 to 244; it reads KQLFARYGLP…QSQEDPREAQ (236 aa). Residues Lys-46, 53-55, Glu-99, Thr-102, and Glu-107 contribute to the ATP site; that span reads GRG. The Mg(2+) site is built by Asn-199 and Asp-213. Substrate contacts are provided by residues Asn-264 and 321 to 323; that span reads GIV.

It belongs to the succinate/malate CoA ligase beta subunit family. In terms of assembly, heterotetramer of two alpha and two beta subunits. Requires Mg(2+) as cofactor.

It catalyses the reaction succinate + ATP + CoA = succinyl-CoA + ADP + phosphate. It carries out the reaction GTP + succinate + CoA = succinyl-CoA + GDP + phosphate. It functions in the pathway carbohydrate metabolism; tricarboxylic acid cycle; succinate from succinyl-CoA (ligase route): step 1/1. Its function is as follows. Succinyl-CoA synthetase functions in the citric acid cycle (TCA), coupling the hydrolysis of succinyl-CoA to the synthesis of either ATP or GTP and thus represents the only step of substrate-level phosphorylation in the TCA. The beta subunit provides nucleotide specificity of the enzyme and binds the substrate succinate, while the binding sites for coenzyme A and phosphate are found in the alpha subunit. The chain is Succinate--CoA ligase [ADP-forming] subunit beta from Escherichia coli O139:H28 (strain E24377A / ETEC).